The chain runs to 110 residues: UPF0122 protein Sca_0859 (110 aa).

The protein belongs to the UPF0122 family.

In terms of biological role, might take part in the signal recognition particle (SRP) pathway. This is inferred from the conservation of its genetic proximity to ftsY/ffh. May be a regulatory protein. This chain is UPF0122 protein Sca_0859, found in Staphylococcus carnosus (strain TM300).